The primary structure comprises 136 residues: DNA-directed RNA polymerase subunit omega (136 aa).

The segment at 81–136 is disordered; the sequence is EAEAVPLLSSSPAAAAVAPQSSGDDGDIQFDRMSEEDLLRGLENLAPPTETEDEGD. Low complexity predominate over residues 83 to 99; sequence EAVPLLSSSPAAAAVAP. Over residues 109–120 the composition is skewed to basic and acidic residues; sequence QFDRMSEEDLLR.

Belongs to the RNA polymerase subunit omega family. As to quaternary structure, the RNAP catalytic core consists of 2 alpha, 1 beta, 1 beta' and 1 omega subunit. When a sigma factor is associated with the core the holoenzyme is formed, which can initiate transcription.

The catalysed reaction is RNA(n) + a ribonucleoside 5'-triphosphate = RNA(n+1) + diphosphate. Its function is as follows. Promotes RNA polymerase assembly. Latches the N- and C-terminal regions of the beta' subunit thereby facilitating its interaction with the beta and alpha subunits. The sequence is that of DNA-directed RNA polymerase subunit omega from Methylobacterium nodulans (strain LMG 21967 / CNCM I-2342 / ORS 2060).